A 299-amino-acid polypeptide reads, in one-letter code: Peroxisomal biogenesis factor 19 (299 aa).

Residues 1–63 (MAAAEGDGGV…SPGDTAKDAL (63 aa)) form a disordered region. Ala2 is modified (N-acetylalanine). Positions 2 to 56 (AAAEGDGGVRAEADRELEELLESALDDFDKAKPSPAPPPTTTAPDASGPQKRSPG) are docking to the peroxisome membrane and binding to PEX3. The interval 2 to 91 (AAAEGDGGVR…QATAEFEKAM (90 aa)) is necessary for PEX19 function on peroxisome biogenesis. The span at 16 to 27 (RELEELLESALD) shows a compositional bias: acidic residues. A phosphoserine mark is found at Ser35, Ser54, and Ser66. Thr236 carries the post-translational modification Phosphothreonine. At Cys296 the chain carries Cysteine methyl ester. A lipid anchor (S-farnesyl cysteine) is attached at Cys296. A propeptide spans 297–299 (LIM) (removed in mature form).

This sequence belongs to the peroxin-19 family. In terms of assembly, interacts with a broad range of peroxisomal membrane proteins, including PEX3, PEX10, PEX11A, PEX11B, PEX12, PEX13, PEX14 and PEX16, PXMP2/PMP22, PXMP4/PMP24, SLC25A17/PMP34, ABCD1/ALDP, ABCD2/ALDRP, and ABCD3/PMP70. Also interacts with the tumor suppressor CDKN2A/p19ARF.

The protein resides in the cytoplasm. It is found in the peroxisome membrane. Necessary for early peroxisomal biogenesis. Acts both as a cytosolic chaperone and as an import receptor for peroxisomal membrane proteins (PMPs). Binds and stabilizes newly synthesized PMPs in the cytoplasm by interacting with their hydrophobic membrane-spanning domains, and targets them to the peroxisome membrane by binding to the integral membrane protein PEX3. Excludes CDKN2A from the nucleus and prevents its interaction with MDM2, which results in active degradation of TP53. The polypeptide is Peroxisomal biogenesis factor 19 (PEX19) (Bos taurus (Bovine)).